The primary structure comprises 720 residues: Mitogen-activated protein kinase 6 (720 aa).

Met1 participates in a covalent cross-link: Peptide (Met-Gly) (interchain with G-Cter in ubiquitin). In terms of domain architecture, Protein kinase spans 20 to 316; sequence YMDLKPLGCG…AEEALSHPYM (297 aa). ATP contacts are provided by residues 26–34 and Lys49; that span reads LGCGGNGLV. Residue Asp152 is the Proton acceptor of the active site. Ser189 carries the phosphoserine; by PAK1, PAK2 and PAK3 modification. The SEG motif motif lies at 189 to 191; sequence SEG. The FRIEDE motif motif lies at 332–337; that stretch reads FHIEDE. A phosphoserine mark is found at Ser386, Ser554, and Ser556. The interval 638 to 657 is disordered; it reads SEMLETEPVEEGKRGERGRE. The segment covering 647 to 657 has biased composition (basic and acidic residues); that stretch reads EEGKRGERGRE. The residue at position 683 (Ser683) is a Phosphoserine. The segment covering 700 to 714 has biased composition (polar residues); it reads AMKSSPQIPHKTYSS. The segment at 700–720 is disordered; sequence AMKSSPQIPHKTYSSILKHLN.

The protein belongs to the protein kinase superfamily. CMGC Ser/Thr protein kinase family. MAP kinase subfamily. Heterodimer with ERK4/MAPK4. Interacts with (via FRIEDE motif) MAPKAPK5. Interacts with UBE3A; this interaction may be indirect and mediated by HERC2, possibly via HERC2 interaction with NEURL4. Requires Mg(2+) as cofactor. Phosphorylated at Ser-189 by PAK1, PAK2 and PAK3 resulting in catalytic activation. Phosphorylated by MAPKAPK5 at other sites. Post-translationally, ubiquitination at Met-1 leads to degradation by the proteasome pathway.

Its subcellular location is the cytoplasm. The protein localises to the nucleus. It carries out the reaction L-seryl-[protein] + ATP = O-phospho-L-seryl-[protein] + ADP + H(+). It catalyses the reaction L-threonyl-[protein] + ATP = O-phospho-L-threonyl-[protein] + ADP + H(+). Activated by phosphorylation at Ser-189. Its function is as follows. Atypical MAPK protein. Phosphorylates microtubule-associated protein 2 (MAP2) and MAPKAPK5. The precise role of the complex formed with MAPKAPK5 is still unclear, but the complex follows a complex set of phosphorylation events: upon interaction with atypical MAPKAPK5, ERK3/MAPK6 is phosphorylated at Ser-189 and then mediates phosphorylation and activation of MAPKAPK5, which in turn phosphorylates ERK3/MAPK6. May promote entry in the cell cycle. In Mus musculus (Mouse), this protein is Mitogen-activated protein kinase 6 (Mapk6).